Here is a 133-residue protein sequence, read N- to C-terminus: Small ribosomal subunit protein uS9 (133 aa).

A disordered region spans residues 111–133 (PRRSESKKFGGPGARARKQKSYR).

It belongs to the universal ribosomal protein uS9 family.

This is Small ribosomal subunit protein uS9 from Methanosphaera stadtmanae (strain ATCC 43021 / DSM 3091 / JCM 11832 / MCB-3).